The sequence spans 213 residues: Succinate dehydrogenase subunit 3-1, mitochondrial (213 aa).

The N-terminal 105 residues, 1–105, are a transit peptide targeting the mitochondrion; the sequence is MAATALFRSI…LDVGTSKRLF (105 aa). Heme is bound at residue His130. The helical transmembrane segment at 148–165 threads the bilayer; that stretch reads ISGVYLTGVTFAGYLLYL.

In terms of assembly, component of complex II composed of eight subunits in plants: four classical SDH subunits SDH1, SDH2, SDH3 and SDH4 (a flavoprotein (FP), an iron-sulfur protein (IP), and a cytochrome b composed of a large and a small subunit.), as well as four subunits unknown in mitochondria from bacteria and heterotrophic eukaryotes. The cofactor is heme. In terms of tissue distribution, expressed in flowers, inflorescences and stems.

The protein localises to the mitochondrion inner membrane. Its pathway is carbohydrate metabolism; tricarboxylic acid cycle. In terms of biological role, membrane-anchoring subunit of succinate dehydrogenase (SDH). This is Succinate dehydrogenase subunit 3-1, mitochondrial from Arabidopsis thaliana (Mouse-ear cress).